A 133-amino-acid chain; its full sequence is MPSLCIIALFGTLTFYTLIPSIHTLKCVICDSPMGNYDCKTTYPAATECPGSSNNYCYKRETFASNGNLDQIRRNCNPVAASSKACKDLENGAKICEYSCNTDGCNSVAGMEPTRAVYFIAILMLTFYTFIRL.

Positions 1–24 (MPSLCIIALFGTLTFYTLIPSIHT) are cleaved as a signal peptide.

It belongs to the scoloptoxin-05 family. Contains 5 disulfide bonds. Expressed by the venom gland.

It localises to the secreted. The protein is U-scoloptoxin(05)-Sa1a of Scolopendra alternans (Florida Keys giant centipede).